We begin with the raw amino-acid sequence, 60 residues long: Cytotoxin 7 (60 aa).

Disulfide bonds link cysteine 3-cysteine 21, cysteine 14-cysteine 38, cysteine 42-cysteine 53, and cysteine 54-cysteine 59.

Belongs to the three-finger toxin family. Short-chain subfamily. Type IA cytotoxin sub-subfamily. Monomer in solution; Homodimer and oligomer in the presence of negatively charged lipids forming a pore with a size ranging between 20 and 30 Angstroms. In terms of tissue distribution, expressed by the venom gland.

The protein resides in the secreted. It localises to the target cell membrane. Functionally, shows cytolytic activity on many different cells by forming pore in lipid membranes. In vivo, increases heart rate or kills the animal by cardiac arrest. In addition, it binds to heparin with high affinity, interacts with Kv channel-interacting protein 1 (KCNIP1) in a calcium-independent manner, and binds to integrin alpha-V/beta-3 (ITGAV/ITGB3) with moderate affinity. Preferentially binds acidic phospholipids like phosphatidylserine, phosphatidic acid and phosphatidyl glycerol. Has hemolytic activity towards human erythrocytes (EC(50)=0.171 uM) and cytolytic activity towards various cell lines. This Naja naja (Indian cobra) protein is Cytotoxin 7.